The chain runs to 479 residues: Sulfate adenylyltransferase subunit 1 (479 aa).

In terms of domain architecture, tr-type G spans 22–238 (KDMLRFLTCG…DSMDISKEPK (217 aa)). Positions 31–38 (GSVDDGKS) are G1. 31-38 (GSVDDGKS) provides a ligand contact to GTP. The G2 stretch occupies residues 89 to 93 (GITID). The interval 110–113 (DTPG) is G3. GTP is bound by residues 110-114 (DTPGH) and 165-168 (NKMD). The interval 165–168 (NKMD) is G4. A G5 region spans residues 202-204 (SAL).

It belongs to the TRAFAC class translation factor GTPase superfamily. Classic translation factor GTPase family. CysN/NodQ subfamily. In terms of assembly, heterodimer composed of CysD, the smaller subunit, and CysN.

It catalyses the reaction sulfate + ATP + H(+) = adenosine 5'-phosphosulfate + diphosphate. The protein operates within sulfur metabolism; hydrogen sulfide biosynthesis; sulfite from sulfate: step 1/3. In terms of biological role, with CysD forms the ATP sulfurylase (ATPS) that catalyzes the adenylation of sulfate producing adenosine 5'-phosphosulfate (APS) and diphosphate, the first enzymatic step in sulfur assimilation pathway. APS synthesis involves the formation of a high-energy phosphoric-sulfuric acid anhydride bond driven by GTP hydrolysis by CysN coupled to ATP hydrolysis by CysD. The sequence is that of Sulfate adenylyltransferase subunit 1 from Sulfurovum sp. (strain NBC37-1).